Here is a 324-residue protein sequence, read N- to C-terminus: Polyketide biosynthesis acyltransferase homolog BaeD (324 aa).

Residue Ser-99 is part of the active site.

It is found in the cytoplasm. It participates in antibiotic biosynthesis; bacillaene biosynthesis. Its function is as follows. Probably involved in some intermediate steps for the synthesis of the antibiotic polyketide bacillaene which is involved in secondary metabolism. The sequence is that of Polyketide biosynthesis acyltransferase homolog BaeD (baeD) from Bacillus velezensis (strain DSM 23117 / BGSC 10A6 / LMG 26770 / FZB42) (Bacillus amyloliquefaciens subsp. plantarum).